Consider the following 316-residue polypeptide: Acetaldehyde dehydrogenase 3 (316 aa).

An NAD(+)-binding site is contributed by 12–15 (SGNI). Cys132 serves as the catalytic Acyl-thioester intermediate. NAD(+) is bound by residues 163–171 (SAGPGTRAN) and Asn289.

It belongs to the acetaldehyde dehydrogenase family.

It carries out the reaction acetaldehyde + NAD(+) + CoA = acetyl-CoA + NADH + H(+). This chain is Acetaldehyde dehydrogenase 3 (mhpF), found in Comamonas testosteroni (Pseudomonas testosteroni).